Reading from the N-terminus, the 184-residue chain is UPF0398 protein OB1025 (184 aa).

This sequence belongs to the UPF0398 family.

The protein is UPF0398 protein OB1025 of Oceanobacillus iheyensis (strain DSM 14371 / CIP 107618 / JCM 11309 / KCTC 3954 / HTE831).